Here is a 332-residue protein sequence, read N- to C-terminus: Phosphate acyltransferase (332 aa).

Belongs to the PlsX family. In terms of assembly, homodimer. Probably interacts with PlsY.

The protein localises to the cytoplasm. The catalysed reaction is a fatty acyl-[ACP] + phosphate = an acyl phosphate + holo-[ACP]. The protein operates within lipid metabolism; phospholipid metabolism. Functionally, catalyzes the reversible formation of acyl-phosphate (acyl-PO(4)) from acyl-[acyl-carrier-protein] (acyl-ACP). This enzyme utilizes acyl-ACP as fatty acyl donor, but not acyl-CoA. This is Phosphate acyltransferase from Oceanobacillus iheyensis (strain DSM 14371 / CIP 107618 / JCM 11309 / KCTC 3954 / HTE831).